A 128-amino-acid chain; its full sequence is MQRHMLKSKIHRAAVTHCELHYEGSCAIDEDLLEAANIVENERIDIWNINNGERFSTYAIKGERGSGMISLNGSAARRAQLGDLVIIAAFAMVEEAELQAGWKPKLVFIDEGNKIKGHRDHVPTQTWT.

S25 (schiff-base intermediate with substrate; via pyruvic acid) is an active-site residue. S25 bears the Pyruvic acid (Ser) mark. T57 is a substrate binding site. Catalysis depends on Y58, which acts as the Proton donor. G73–A75 provides a ligand contact to substrate.

Belongs to the PanD family. In terms of assembly, heterooctamer of four alpha and four beta subunits. The cofactor is pyruvate. Post-translationally, is synthesized initially as an inactive proenzyme, which is activated by self-cleavage at a specific serine bond to produce a beta-subunit with a hydroxyl group at its C-terminus and an alpha-subunit with a pyruvoyl group at its N-terminus.

Its subcellular location is the cytoplasm. The catalysed reaction is L-aspartate + H(+) = beta-alanine + CO2. It functions in the pathway cofactor biosynthesis; (R)-pantothenate biosynthesis; beta-alanine from L-aspartate: step 1/1. Functionally, catalyzes the pyruvoyl-dependent decarboxylation of aspartate to produce beta-alanine. The sequence is that of Aspartate 1-decarboxylase from Burkholderia multivorans (strain ATCC 17616 / 249).